The chain runs to 213 residues: Putative transmembrane protein DDB_G0267860 (213 aa).

Residues methionine 1 to alanine 22 form the signal peptide. The Extracellular segment spans residues isoleucine 23 to serine 191. Asparagine 92 and asparagine 114 each carry an N-linked (GlcNAc...) asparagine glycan. A helical transmembrane segment spans residues isoleucine 192–isoleucine 212. Position 213 (asparagine 213) is a topological domain, cytoplasmic.

It is found in the membrane. The protein is Putative transmembrane protein DDB_G0267860 of Dictyostelium discoideum (Social amoeba).